The following is a 207-amino-acid chain: uncharacterized protein (207 aa).

It belongs to the IIV-6 350L family.

This is an uncharacterized protein from Invertebrate iridescent virus 6 (IIV-6).